The following is a 536-amino-acid chain: Apoptosis inhibitor 5 homolog (536 aa).

The segment at 462-536 is disordered; sequence ITFGEKAAAN…GYRNRRFNKY (75 aa). Over residues 472 to 487 the composition is skewed to basic and acidic residues; sequence GKDKDQEPEKKSRPSN. Residues 498-507 are compositionally biased toward polar residues; the sequence is KYSNKVNQSY. A compositionally biased stretch (gly residues) spans 516-528; that stretch reads RGGGGGGGSGGGY.

It belongs to the API5 family.

Its subcellular location is the nucleus. Functionally, antiapoptotic factor. Also known to efficiently suppress E2F1-induced apoptosis. The sequence is that of Apoptosis inhibitor 5 homolog from Drosophila melanogaster (Fruit fly).